The primary structure comprises 123 residues: Large ribosomal subunit protein bL17 (123 aa).

This sequence belongs to the bacterial ribosomal protein bL17 family. As to quaternary structure, part of the 50S ribosomal subunit. Contacts protein L32.

This Borreliella burgdorferi (strain ZS7) (Borrelia burgdorferi) protein is Large ribosomal subunit protein bL17.